The sequence spans 332 residues: L-lactate dehydrogenase (332 aa).

NAD(+) contacts are provided by residues 29 to 57 (GQVG…CADK) and Arg-99. Arg-106, Asn-138, and Arg-169 together coordinate substrate. Asn-138 provides a ligand contact to NAD(+). His-193 acts as the Proton acceptor in catalysis. Thr-248 contributes to the substrate binding site.

It belongs to the LDH/MDH superfamily. LDH family. As to quaternary structure, homotetramer.

It localises to the cytoplasm. It carries out the reaction (S)-lactate + NAD(+) = pyruvate + NADH + H(+). It functions in the pathway fermentation; pyruvate fermentation to lactate; (S)-lactate from pyruvate: step 1/1. This chain is L-lactate dehydrogenase, found in Drosophila melanogaster (Fruit fly).